Reading from the N-terminus, the 115-residue chain is UPF0102 protein Swol_1475 (115 aa).

It belongs to the UPF0102 family.

This is UPF0102 protein Swol_1475 from Syntrophomonas wolfei subsp. wolfei (strain DSM 2245B / Goettingen).